A 317-amino-acid polypeptide reads, in one-letter code: Acetyl-coenzyme A carboxylase carboxyl transferase subunit alpha (317 aa).

Positions 40–293 (LEKRSADALK…GDIIAASLRS (254 aa)) constitute a CoA carboxyltransferase C-terminal domain.

Belongs to the AccA family. In terms of assembly, acetyl-CoA carboxylase is a heterohexamer composed of biotin carboxyl carrier protein (AccB), biotin carboxylase (AccC) and two subunits each of ACCase subunit alpha (AccA) and ACCase subunit beta (AccD).

The protein localises to the cytoplasm. It catalyses the reaction N(6)-carboxybiotinyl-L-lysyl-[protein] + acetyl-CoA = N(6)-biotinyl-L-lysyl-[protein] + malonyl-CoA. It participates in lipid metabolism; malonyl-CoA biosynthesis; malonyl-CoA from acetyl-CoA: step 1/1. Component of the acetyl coenzyme A carboxylase (ACC) complex. First, biotin carboxylase catalyzes the carboxylation of biotin on its carrier protein (BCCP) and then the CO(2) group is transferred by the carboxyltransferase to acetyl-CoA to form malonyl-CoA. The chain is Acetyl-coenzyme A carboxylase carboxyl transferase subunit alpha from Brucella canis (strain ATCC 23365 / NCTC 10854 / RM-666).